We begin with the raw amino-acid sequence, 268 residues long: UPF0719 transmembrane protein aq_1349 (268 aa).

8 helical membrane-spanning segments follow: residues leucine 5–arginine 24, asparagine 37–tyrosine 59, leucine 69–arginine 91, alanine 104–tryptophan 126, serine 130–serine 152, phenylalanine 173–serine 195, valine 210–phenylalanine 232, and asparagine 245–methionine 267.

This sequence belongs to the UPF0719 family.

It is found in the cell membrane. The chain is UPF0719 transmembrane protein aq_1349 from Aquifex aeolicus (strain VF5).